Here is a 180-residue protein sequence, read N- to C-terminus: NADH-quinone oxidoreductase subunit I (180 aa).

4Fe-4S ferredoxin-type domains are found at residues 50–80 and 90–119; these read LTRD…LQKA and EFFR…LTPD. [4Fe-4S] cluster is bound by residues Cys60, Cys63, Cys66, Cys70, Cys99, Cys102, Cys105, and Cys109.

This sequence belongs to the complex I 23 kDa subunit family. As to quaternary structure, NDH-1 is composed of 14 different subunits. Subunits NuoA, H, J, K, L, M, N constitute the membrane sector of the complex. The cofactor is [4Fe-4S] cluster.

It is found in the cell inner membrane. The enzyme catalyses a quinone + NADH + 5 H(+)(in) = a quinol + NAD(+) + 4 H(+)(out). Its function is as follows. NDH-1 shuttles electrons from NADH, via FMN and iron-sulfur (Fe-S) centers, to quinones in the respiratory chain. The immediate electron acceptor for the enzyme in this species is believed to be ubiquinone. Couples the redox reaction to proton translocation (for every two electrons transferred, four hydrogen ions are translocated across the cytoplasmic membrane), and thus conserves the redox energy in a proton gradient. The sequence is that of NADH-quinone oxidoreductase subunit I from Acinetobacter baumannii (strain ACICU).